Reading from the N-terminus, the 62-residue chain is Glucagon (62 aa).

The protein belongs to the glucagon family.

It localises to the secreted. Functionally, promotes hydrolysis of glycogen and lipids, and raises the blood sugar level. The chain is Glucagon (gcg) from Scyliorhinus canicula (Small-spotted catshark).